The following is a 507-amino-acid chain: uncharacterized protein (507 aa).

12 helical membrane-spanning segments follow: residues 46–66 (WIVL…WIGY), 83–103 (AWLS…AMWA), 112–132 (AVLI…ISSL), 141–161 (FPIC…IMFL), 181–201 (IGVM…PAIV), 207–227 (VIWL…IATF), 263–283 (IILL…YTVM), 299–319 (VCAA…SIFV), 328–348 (TLKI…QLTL), 354–374 (VILG…YPIG), 389–409 (TSTG…VFIM), and 442–462 (MSIM…VVLF). Residues 477–493 (ATADKAKELSNQNKDRI) show a composition bias toward basic and acidic residues. The disordered stretch occupies residues 477 to 507 (ATADKAKELSNQNKDRITLQAESAVEPLQKK).

The protein resides in the membrane. This is an uncharacterized protein from Caenorhabditis elegans.